Consider the following 152-residue polypeptide: Transcriptional regulator MraZ (152 aa).

SpoVT-AbrB domains lie at 5 to 52 and 81 to 124; these read ATLV…PLPE and ASEC…DETT.

Belongs to the MraZ family. Dodecamer.

It is found in the cytoplasm. It localises to the nucleoid. Negatively regulates its own expression and that of the subsequent genes in the proximal part of the division and cell wall (dcw) gene cluster. Acts by binding directly to DNA. May also regulate the expression of genes outside the dcw cluster. This is Transcriptional regulator MraZ from Escherichia coli (strain K12).